A 379-amino-acid polypeptide reads, in one-letter code: Zinc metalloproteinase nas-20 (379 aa).

An N-terminal signal peptide occupies residues 1-20; that stretch reads MKITVNFLLVALIGVPSVLS. A propeptide spanning residues 21–29 is cleaved from the precursor; it reads DRHITRDKR. Residues 30-208 enclose the Peptidase M12A domain; the sequence is QAMRDYAKWE…VLLNKFYGCN (179 aa). Asparagine 67 is a glycosylation site (N-linked (GlcNAc...) asparagine). 4 disulfides stabilise this stretch: cysteine 70–cysteine 207, cysteine 91–cysteine 111, cysteine 209–cysteine 229, and cysteine 234–cysteine 243. Histidine 119 provides a ligand contact to Zn(2+). Glutamate 120 is an active-site residue. 2 residues coordinate Zn(2+): histidine 123 and histidine 129. N-linked (GlcNAc...) asparagine glycosylation occurs at asparagine 185. The EGF-like domain occupies 203–244; it reads KFYGCNCDNHPRKLDCKNGGYQNPANCEECLCTDGFNGQLCD. Residues asparagine 337 and asparagine 370 are each glycosylated (N-linked (GlcNAc...) asparagine).

The cofactor is Zn(2+).

It localises to the secreted. Metalloprotease. The chain is Zinc metalloproteinase nas-20 (nas-20) from Caenorhabditis elegans.